The following is a 156-amino-acid chain: ATP synthase subunit b (156 aa).

Residues Leu-7–Trp-26 traverse the membrane as a helical segment.

This sequence belongs to the ATPase B chain family. In terms of assembly, F-type ATPases have 2 components, F(1) - the catalytic core - and F(0) - the membrane proton channel. F(1) has five subunits: alpha(3), beta(3), gamma(1), delta(1), epsilon(1). F(0) has three main subunits: a(1), b(2) and c(10-14). The alpha and beta chains form an alternating ring which encloses part of the gamma chain. F(1) is attached to F(0) by a central stalk formed by the gamma and epsilon chains, while a peripheral stalk is formed by the delta and b chains.

It is found in the cell inner membrane. F(1)F(0) ATP synthase produces ATP from ADP in the presence of a proton or sodium gradient. F-type ATPases consist of two structural domains, F(1) containing the extramembraneous catalytic core and F(0) containing the membrane proton channel, linked together by a central stalk and a peripheral stalk. During catalysis, ATP synthesis in the catalytic domain of F(1) is coupled via a rotary mechanism of the central stalk subunits to proton translocation. In terms of biological role, component of the F(0) channel, it forms part of the peripheral stalk, linking F(1) to F(0). This is ATP synthase subunit b from Haemophilus ducreyi (strain 35000HP / ATCC 700724).